A 586-amino-acid polypeptide reads, in one-letter code: Nucleus accumbens-associated protein 2 (586 aa).

A BTB domain is found at 30-94; it reads CDVSIVVKGQ…CYTGKLTMAA (65 aa). K171 is covalently cross-linked (Glycyl lysine isopeptide (Lys-Gly) (interchain with G-Cter in SUMO2)). The segment at 177–196 is disordered; it reads MPPASGPGLASKRPLETGPR. K215 is covalently cross-linked (Glycyl lysine isopeptide (Lys-Gly) (interchain with G-Cter in SUMO2)). Residues 236–272 are disordered; it reads QVPYPPGERTSPGASSLPTTDSPTSYHNEEDEEDDEA. The span at 247–261 shows a compositional bias: polar residues; that stretch reads PGASSLPTTDSPTSY. Glycyl lysine isopeptide (Lys-Gly) (interchain with G-Cter in SUMO2) cross-links involve residues K297, K427, and K454. Positions 349–446 constitute a BEN domain; that stretch reads GSGVYITRGQ…DMCTNARRVR (98 aa). Residues 542–586 form a disordered region; sequence APEQLPADGQSSPQAFEQGNTSSSRPQTPVATATRRPEGTYAGTL. The segment covering 550 to 572 has biased composition (polar residues); it reads GQSSPQAFEQGNTSSSRPQTPVA.

Homooligomer; mediated by the BTB domain. Interacts with the NuRD complex. Interacts (via C-terminal part) with HDAC2. Interacts (via BTB domain) with MTA1, MTA2 and MTA3.

It localises to the nucleus. Functionally, functions as a transcriptional repressor through its association with the NuRD complex. Recruits the NuRD complex to the promoter of MDM2, leading to the repression of MDM2 transcription and subsequent stability of p53/TP53. This chain is Nucleus accumbens-associated protein 2 (Nacc2), found in Mus musculus (Mouse).